The primary structure comprises 434 residues: Monodehydroascorbate reductase 1, peroxisomal (434 aa).

FAD is bound by residues 13–16, Glu-40, Arg-47, Lys-52, Ile-95, and 146–147; these read GGVS and RE. Residues 171-177, Glu-195, Arg-201, and Gly-260 contribute to the NAD(+) site; that span reads GGYIGLE. NADP(+) is bound at residue 173–177; that stretch reads YIGLE. Positions 201 and 260 each coordinate NADP(+). Position 297 (Asp-297) interacts with FAD. 313–314 provides a ligand contact to NAD(+); it reads EH. 313–314 provides a ligand contact to NADP(+); it reads EH. Val-315 provides a ligand contact to FAD. An L-ascorbate-binding site is contributed by Arg-319. Tyr-348 is a binding site for FAD. Tyr-348 provides a ligand contact to NAD(+). Residue Tyr-348 participates in NADP(+) binding. Position 350 (Arg-350) interacts with L-ascorbate. The residue at position 416 (Ser-416) is a Phosphoserine.

This sequence belongs to the FAD-dependent oxidoreductase family. The cofactor is FAD.

Its subcellular location is the peroxisome matrix. It carries out the reaction 2 monodehydro-L-ascorbate radical + NADH + H(+) = 2 L-ascorbate + NAD(+). Its function is as follows. Catalyzes the conversion of monodehydroascorbate to ascorbate, oxidizing NADH in the process. The chain is Monodehydroascorbate reductase 1, peroxisomal from Arabidopsis thaliana (Mouse-ear cress).